The primary structure comprises 466 residues: Uronate isomerase (466 aa).

Belongs to the metallo-dependent hydrolases superfamily. Uronate isomerase family.

The enzyme catalyses D-glucuronate = D-fructuronate. It catalyses the reaction aldehydo-D-galacturonate = keto-D-tagaturonate. It participates in carbohydrate metabolism; pentose and glucuronate interconversion. In Streptococcus pneumoniae (strain 70585), this protein is Uronate isomerase.